A 372-amino-acid chain; its full sequence is MRDKVTGARRWVVKIGSALLTADGRGLDRNAMAVWVEQMVALHCAGIELVLVSSGAVAAGMSRLGWVSRPSAMHELQAAASVGQMGLVQAWESSFALHGLQTAQVLLTHDDLSDRKRYLNARSTLRTLVELGVVPVINENDTVVTDEIRFGDNDTLAALVANLVEADLLVILTDRDGMFDADPRNNPDAQLIYEARADDPQLDAVAGGSAGALGRGGMQTKLRAARLAARSGGHTVIVGGRIERVLDRLRAGERLGTLLTPDRSRKAARKQWLAGHLQMRGTLVLDDGAVKAVSQDHKSLLPVGVKAVQGSFRRGEMVVCVDQSGREVARGLVNYSALEAQKILGQPTDAIEALLGYVDGPELVHRDNLVLV.

Lys14 is an ATP binding site. Substrate contacts are provided by Ser54, Asp141, and Asn153. 173–174 (TD) is a binding site for ATP. Positions 280–358 (RGTLVLDDGA…DAIEALLGYV (79 aa)) constitute a PUA domain.

It belongs to the glutamate 5-kinase family.

The protein localises to the cytoplasm. It carries out the reaction L-glutamate + ATP = L-glutamyl 5-phosphate + ADP. Its pathway is amino-acid biosynthesis; L-proline biosynthesis; L-glutamate 5-semialdehyde from L-glutamate: step 1/2. Catalyzes the transfer of a phosphate group to glutamate to form L-glutamate 5-phosphate. This Pseudomonas paraeruginosa (strain DSM 24068 / PA7) (Pseudomonas aeruginosa (strain PA7)) protein is Glutamate 5-kinase.